Reading from the N-terminus, the 329-residue chain is DNA-directed RNA polymerase subunit alpha (329 aa).

The tract at residues 1–235 (MVREKVKVST…DLFIPFLHTE (235 aa)) is alpha N-terminal domain (alpha-NTD). The segment at 269–329 (IALKYIFIDQ…KQILGILEKK (61 aa)) is alpha C-terminal domain (alpha-CTD).

It belongs to the RNA polymerase alpha chain family. As to quaternary structure, in plastids the minimal PEP RNA polymerase catalytic core is composed of four subunits: alpha, beta, beta', and beta''. When a (nuclear-encoded) sigma factor is associated with the core the holoenzyme is formed, which can initiate transcription.

The protein resides in the plastid. The protein localises to the chloroplast. The enzyme catalyses RNA(n) + a ribonucleoside 5'-triphosphate = RNA(n+1) + diphosphate. Its function is as follows. DNA-dependent RNA polymerase catalyzes the transcription of DNA into RNA using the four ribonucleoside triphosphates as substrates. The polypeptide is DNA-directed RNA polymerase subunit alpha (Gossypium hirsutum (Upland cotton)).